The sequence spans 682 residues: Elongation factor G (682 aa).

The tr-type G domain maps to 8 to 282 (QKFRNFGIMA…AVVDYLPSPV (275 aa)). GTP contacts are provided by residues 17-24 (AHIDAGKT), 81-85 (DTPGH), and 135-138 (NKMD).

This sequence belongs to the TRAFAC class translation factor GTPase superfamily. Classic translation factor GTPase family. EF-G/EF-2 subfamily.

The protein resides in the cytoplasm. Functionally, catalyzes the GTP-dependent ribosomal translocation step during translation elongation. During this step, the ribosome changes from the pre-translocational (PRE) to the post-translocational (POST) state as the newly formed A-site-bound peptidyl-tRNA and P-site-bound deacylated tRNA move to the P and E sites, respectively. Catalyzes the coordinated movement of the two tRNA molecules, the mRNA and conformational changes in the ribosome. This Malacoplasma penetrans (strain HF-2) (Mycoplasma penetrans) protein is Elongation factor G.